The chain runs to 604 residues: Glucose-methanol-choline family oxidoreductase mfmG (604 aa).

Residues 1–24 (MYMLRPSSLLLATGLLNQGSSVLA) form the signal peptide. An N-linked (GlcNAc...) asparagine glycan is attached at asparagine 32. Residues 44-45 (TA) and 65-66 (EA) each bind FAD. N-linked (GlcNAc...) asparagine glycosylation is found at asparagine 76 and asparagine 97. 126-129 (NFMA) serves as a coordination point for FAD. N-linked (GlcNAc...) asparagine glycosylation is found at asparagine 260, asparagine 265, asparagine 401, and asparagine 460. Histidine 538 acts as the Proton acceptor in catalysis. FAD-binding positions include alanine 572 and 584 to 585 (PQ).

It belongs to the GMC oxidoreductase family. As to quaternary structure, homodimer. FAD serves as cofactor.

In terms of biological role, oxidoreductase; part of the gene cluster that mediates the biosynthesis of the phthalide-terpenoid hybrid 11'-O-desmethylfendlerol. MfmG seems not to be involved directly in the biosynthesis of 11'-O-desmethylfendlerol and its role has still to be determined. The biosynthesis of 11'-O-desmethylfendlerol begins with the NR-PKS mfmB that forms 3,5-dimethylorsellinic acid (DMOA), which is then transformed into the phthalide 5,7-dihydroxy-4-(hydroxymethyl)-6-methylphthalide by the cytochrome P450 monooxygenase mfmA and the hydrolase mfmC. Subsequently, the methyltransferase mfmE catalyzes 7-O-methylation to yield 5-hydroxy-4-(hydroxymethyl)-7-methoxy-6-methylphthalide, which undergoes C-3 hydroxylation by the cytochrome P450 monooxygenase mfmF. The resultant cyclopolic acid (2,5-dihydroxy-4-(hydroxymethyl)-7-methoxy-6-methylphthalide) is then farnesylated by the DMATS-type prenyltransferase mfmD to afford 5-O-farnesylcyclopolic acid. Finally, the Pyr4-family terpene cyclase mfmH cyclizes the farnesyl moiety of 5-O-farnesylcyclopolic acid into a drimane-like structure, thus completing the biosynthesis of 11'-O-desmethylfendlerol. The protein is Glucose-methanol-choline family oxidoreductase mfmG of Annulohypoxylon moriforme (Filamentous fungus).